The following is a 199-amino-acid chain: Thioredoxin reductase-like selenoprotein T (199 aa).

Positions 1–24 are cleaved as a signal peptide; the sequence is MRAAGLGLGIGLLLLAALAGPGGS. The segment at residues 50–53 is a cross-link (cysteinyl-selenocysteine (Cys-Sec)); that stretch reads CVSU. Residue U53 is a non-standard amino acid, selenocysteine. Residues 95-115 traverse the membrane as a helical segment; it reads VFKLVLIGLIIVGKDPFAFFG.

The protein belongs to the SelWTH family. Selenoprotein T subfamily. May contain a selenide-sulfide bond between Cys-50 and Sec-53. This bond is speculated to serve as redox-active pair.

It is found in the endoplasmic reticulum membrane. The enzyme catalyses [thioredoxin]-dithiol + NADP(+) = [thioredoxin]-disulfide + NADPH + H(+). Functionally, selenoprotein with thioredoxin reductase-like oxidoreductase activity. The polypeptide is Thioredoxin reductase-like selenoprotein T (Gallus gallus (Chicken)).